The primary structure comprises 112 residues: Ig kappa chain V-II region 2S1.3 (112 aa).

The framework-1 stretch occupies residues 1 to 23 (DIVMTQAAFSNPVTLGTSASFSC). Cys-23 and Cys-93 are oxidised to a cystine. The interval 24–39 (RSSKSLQQSKGITYLY) is complementarity-determining-1. The tract at residues 40–54 (WYLQKPGQSPQLLIY) is framework-2. Residues 55-61 (QMSNLAS) form a complementarity-determining-2 region. The interval 62 to 93 (GVPDRFSGSGSGTDFTLRISRVEAEDVGVYYC) is framework-3. Positions 94–102 (ANLQELPYT) are complementarity-determining-3. Residues 103 to 112 (FGGGTKLEIK) form a framework-4 region.

The sequence is that of Ig kappa chain V-II region 2S1.3 from Mus musculus (Mouse).